The sequence spans 881 residues: MESADILPGSRGTVDRRCEGSEEKITPPRPVEDFNPQLFPNEVYLNFTSMHGIQPVVARIRELSRKTVSAAMVPPLEWFERLPRLETPLDIEPLHLPFSVYLISGNAGSGKSTCIQTLNETMDCVITGATRVAAQNVYTKLSSAFATRHINTIFQEFGFRGNHVQAQLGKYQYSCSSSPPPIEELQKRDIVYYWEVLVDITRRLFESTASRGEFENIRALERLLGRAPGSLTRLAFCTNGSLPAFTRTNIVIIDEAGLLGRHLLTVVVYCWWMLNAAYKSPQYAEGKVPVIVCVGSPTQTDSLESRFEHKNLKCHVRSSENVLTHIITNRTIREYVSLSTNWAIFINNKRCQEYEFGELMKVLEYGLPITEEHMRLVDTFVVPEAYINNPANLPGWTRLYSSHKEVSAYMAKLHAHLKVSGERQFVVFTLPAYTFVKTAAFDEYKKITQQPSLSLDKWLAANASRVSNYSQSRDQDAGKTQCEYYSEHGVVVARTDVTYVLNSQVSVTTRMRKFVFGFSGTFETFDAVLKDDAFIKTQGETSVEYAYRFLSTLLFSGMINFYNFLKRPGLDEGRVREAYRRMAALTAKLIPGASVLESACDNPSGAPLNFRGLTDPPGFTGGTTNDWDDDNDVVFAALNEGAIDMLYCNYEFVRPETTQEVYSQFLMLKTMFVGRYSIFMDLFGGDFESSPFDTFVDNISYKGCEIFVGSMRGGVSSIALQTDSYTLMGYTSAPVYPFVEELARRKLHEGIAELFGAMNMPRMVLRDQHGFMSVLNVNLSEFVESVDDVELDMATAVDYGLSSRLAMTIARSQGLSLDKVAICFPRNNLRINSVYVAMSRTVSSRFLRMNLNPLRERHERDTVISEHILAALRDRDVQIVY.

The disordered stretch occupies residues 1 to 32; sequence MESADILPGSRGTVDRRCEGSEEKITPPRPVE. A compositionally biased stretch (basic and acidic residues) spans 13–32; the sequence is TVDRRCEGSEEKITPPRPVE. 105 to 112 is a binding site for ATP; it reads GNAGSGKS.

It belongs to the herpesviridae helicase family. As to quaternary structure, associates with the primase and the primase-associated factor to form the helicase-primase complex.

The protein localises to the host nucleus. Its function is as follows. Component of the helicase/primase complex. Unwinds the DNA at the replication forks and generates single-stranded DNA for both leading and lagging strand synthesis. The primase synthesizes short RNA primers on the lagging strand that the polymerase elongates using dNTPs. Possesses helicase-like motifs and therefore may act as the helicase subunit of the complex. The sequence is that of DNA replication helicase from Equus caballus (Horse).